The primary structure comprises 86 residues: Large ribosomal subunit protein uL10 (86 aa).

It belongs to the universal ribosomal protein uL10 family. In terms of assembly, part of the ribosomal stalk of the 50S ribosomal subunit. The N-terminus interacts with L11 and the large rRNA to form the base of the stalk. The C-terminus forms an elongated spine to which L12 dimers bind in a sequential fashion forming a multimeric L10(L12)X complex.

Its function is as follows. Forms part of the ribosomal stalk, playing a central role in the interaction of the ribosome with GTP-bound translation factors. This chain is Large ribosomal subunit protein uL10 (rplJ), found in Serratia marcescens.